A 452-amino-acid polypeptide reads, in one-letter code: Ribosomal L1 domain-containing protein 1 (452 aa).

N-acetylmethionine is present on Met-1. Glycyl lysine isopeptide (Lys-Gly) (interchain with G-Cter in SUMO2) cross-links involve residues Lys-119 and Lys-253. A coiled-coil region spans residues 277 to 350 (LRSLRKQELK…QKVTEECEEA (74 aa)). Positions 283 to 452 (QELKKRKREN…DKKTKAAHSN (170 aa)) are disordered. A compositionally biased stretch (basic and acidic residues) spans 292–301 (NAKLKKESKM). The segment covering 309 to 319 (ATSLLTQSGLA) has biased composition (polar residues). Basic residues predominate over residues 330 to 341 (QKKKTNKAHKKQ). A phosphothreonine mark is found at Thr-334, Thr-344, Thr-360, Thr-399, and Thr-407. The span at 414 to 423 (KDVQEFRKPE) shows a compositional bias: basic and acidic residues. Polar residues predominate over residues 425–440 (SSFSTPRKSGKKASNT). A Phosphothreonine modification is found at Thr-429. Lys-432 bears the N6-acetyllysine mark. Position 433 is a phosphoserine (Ser-433).

It belongs to the universal ribosomal protein uL1 family. Highly divergent. Interacts with ING1. Interacts with KPNA7 and KPNA2.

It is found in the nucleus. Its subcellular location is the nucleolus. Regulates cellular senescence through inhibition of PTEN translation. Acts as a pro-apoptotic regulator in response to DNA damage. This Mus musculus (Mouse) protein is Ribosomal L1 domain-containing protein 1.